The primary structure comprises 363 residues: Pyrimidine monooxygenase RutA (363 aa).

Residues 49 to 50, Asn115, Glu124, 140 to 141, and Ser190 contribute to the FMN site; these read IK and RY.

The protein belongs to the NtaA/SnaA/DszA monooxygenase family. RutA subfamily.

The enzyme catalyses uracil + FMNH2 + NADH + O2 = (Z)-3-ureidoacrylate + FMN + NAD(+) + H2O + H(+). It carries out the reaction thymine + FMNH2 + NADH + O2 = (Z)-2-methylureidoacrylate + FMN + NAD(+) + H2O + H(+). Catalyzes the pyrimidine ring opening between N-3 and C-4 by an unusual flavin hydroperoxide-catalyzed mechanism, adding oxygen atoms in the process to yield ureidoacrylate peracid, that immediately reacts with FMN forming ureidoacrylate and FMN-N(5)-oxide. The FMN-N(5)-oxide reacts spontaneously with NADH to produce FMN. Requires the flavin reductase RutF to regenerate FMN in vivo. The polypeptide is Pyrimidine monooxygenase RutA (Klebsiella pneumoniae subsp. pneumoniae (strain ATCC 700721 / MGH 78578)).